A 747-amino-acid chain; its full sequence is Superkiller protein 7 (747 aa).

The disordered stretch occupies residues 14–51 (KSKGLLSADQSHSTSKSASLLERLHKNRETKDNNAETK). Over residues 21 to 31 (ADQSHSTSKSA) the composition is skewed to polar residues. Residues 35 to 51 (ERLHKNRETKDNNAETK) show a composition bias toward basic and acidic residues. A phosphoserine mark is found at Ser88 and Ser90. Residues 89–117 (NSDLEKQGKSVTLDSKENELPTKRKSPDD) form a disordered region. Positions 265-503 (PLNLTCLFLG…YVPEWYEGPT (239 aa)) constitute a tr-type G domain. A G1 region spans residues 274-281 (GDTNAGKS). Position 274-281 (274-281 (GDTNAGKS)) interacts with GTP. The G2 stretch occupies residues 331–335 (GFSMF). Residues 356–359 (DTPG) are G3. Residues 356–360 (DTPGS) and 427–430 (NKAD) each bind GTP. A G4 region spans residues 427–430 (NKAD). A G5 region spans residues 467-469 (SGL).

This sequence belongs to the TRAFAC class translation factor GTPase superfamily. Classic translation factor GTPase family. As to quaternary structure, interacts with the exosome and with the SKI complex composed of at least SKI2, SKI3 and SKI8. Interacts directly with SKI3 and SKI8.

The protein localises to the cytoplasm. Represses the expression of non-poly(A) mRNAs like L-A or M viruses and is therefore involved in antiviral system. Mediates interactions via its N-terminus between the exosome and the SKI complex which operate in the 3'-to-5' mRNA-decay pathway. By interacting with NAM7, is also required for nonsense-mediated 3'-to-5' mRNA-decay (NMD). May recognize a stalled 80S ribosome at the 3'-end of a nonstop mRNA which leads to the recruitment of the exosome and SKI complexes to the mRNAs to be degraded. In Saccharomyces cerevisiae (strain ATCC 204508 / S288c) (Baker's yeast), this protein is Superkiller protein 7 (SKI7).